Consider the following 396-residue polypeptide: MDISKLLKDRKILILIIFVTLSVFLIVFKGLDFGIDLSGGTIIVLKAEKPMSDKEIEATIKIITERLNYNGLNDVVIYPRGNDEIIVEIPKSCDTDRIIKILKQQGVFVAKIDNITAYTGSDVQNVELPTKIPQGETWAYGVPFELTLEGAKKFAEVAKGKAYHKVELYMDGKLISAPVLSPDLADGKPHPQQVITVGAYPPTKEEIDEAMAIYSALKSGALPVKLDIEYISTISPEFGKEFLKGTAIALLLAFIAVGIIVSIRYKQPKIAIPILITCISEVIIILGFASLIDWKLDLPSIAGIIAAVGTGVDNQIVITDEALKRGAGKIRASIKRAFFIIFASAATSIAAMLPLFVLGVGMLKGFAITTIAGVLIGIFITRPAFARIIEEMFKKF.

6 helical membrane passes run 12–32 (ILILIIFVTLSVFLIVFKGLD), 243–263 (LKGTAIALLLAFIAVGIIVSI), 272–292 (IPILITCISEVIIILGFASLI), 298–318 (LPSIAGIIAAVGTGVDNQIVI), 338–358 (FFIIFASAATSIAAMLPLFVL), and 360–380 (VGMLKGFAITTIAGVLIGIFI).

Belongs to the SecD/SecF family. SecD subfamily. In terms of assembly, part of the protein translocation apparatus. Forms a complex with SecF.

It localises to the cell membrane. Functionally, involved in protein export. In Methanocaldococcus jannaschii (strain ATCC 43067 / DSM 2661 / JAL-1 / JCM 10045 / NBRC 100440) (Methanococcus jannaschii), this protein is Protein-export membrane protein SecD.